The sequence spans 40 residues: Photosystem II reaction center protein J (40 aa).

The chain crosses the membrane as a helical span at residues 8 to 28; that stretch reads IPLWVVATIAGLGVITVVGIF.

Belongs to the PsbJ family. As to quaternary structure, PSII is composed of 1 copy each of membrane proteins PsbA, PsbB, PsbC, PsbD, PsbE, PsbF, PsbH, PsbI, PsbJ, PsbK, PsbL, PsbM, PsbT, PsbX, PsbY, PsbZ, Psb30/Ycf12, peripheral proteins PsbO, CyanoQ (PsbQ), PsbU, PsbV and a large number of cofactors. It forms dimeric complexes.

It is found in the cellular thylakoid membrane. Functionally, one of the components of the core complex of photosystem II (PSII). PSII is a light-driven water:plastoquinone oxidoreductase that uses light energy to abstract electrons from H(2)O, generating O(2) and a proton gradient subsequently used for ATP formation. It consists of a core antenna complex that captures photons, and an electron transfer chain that converts photonic excitation into a charge separation. The chain is Photosystem II reaction center protein J from Nostoc sp. (strain PCC 7120 / SAG 25.82 / UTEX 2576).